Reading from the N-terminus, the 725-residue chain is Glyoxysomal fatty acid beta-oxidation multifunctional protein MFP-a (725 aa).

In the N-terminal section; belongs to the enoyl-CoA hydratase/isomerase family. It in the central section; belongs to the 3-hydroxyacyl-CoA dehydrogenase family.

The protein localises to the glyoxysome. It catalyses the reaction a (3S)-3-hydroxyacyl-CoA = a (2E)-enoyl-CoA + H2O. The enzyme catalyses a 4-saturated-(3S)-3-hydroxyacyl-CoA = a (3E)-enoyl-CoA + H2O. The catalysed reaction is a (3Z)-enoyl-CoA = a 4-saturated (2E)-enoyl-CoA. It carries out the reaction a (3E)-enoyl-CoA = a 4-saturated (2E)-enoyl-CoA. It catalyses the reaction (3S)-3-hydroxybutanoyl-CoA = (3R)-3-hydroxybutanoyl-CoA. The enzyme catalyses a (3S)-3-hydroxyacyl-CoA + NAD(+) = a 3-oxoacyl-CoA + NADH + H(+). The protein operates within lipid metabolism; fatty acid beta-oxidation. This chain is Glyoxysomal fatty acid beta-oxidation multifunctional protein MFP-a, found in Cucumis sativus (Cucumber).